The following is a 460-amino-acid chain: Origin recognition complex subunit 5 (460 aa).

Residue 41–48 (GHSGTGKT) coordinates ATP.

Belongs to the ORC5 family. As to quaternary structure, ORC is composed of six subunits.

It localises to the nucleus. Its function is as follows. Component of the origin recognition complex (ORC) that binds origins of replication. DNA-binding is ATP-dependent, however specific DNA sequences that define origins of replication have not been identified so far. ORC is required to assemble the pre-replication complex necessary to initiate DNA replication. The protein is Origin recognition complex subunit 5 (Orc5) of Drosophila melanogaster (Fruit fly).